The sequence spans 197 residues: ATP-dependent Clp protease proteolytic subunit 2 (197 aa).

Ser-96 (nucleophile) is an active-site residue. His-121 is an active-site residue.

It belongs to the peptidase S14 family. As to quaternary structure, fourteen ClpP subunits assemble into 2 heptameric rings which stack back to back to give a disk-like structure with a central cavity, resembling the structure of eukaryotic proteasomes.

Its subcellular location is the cytoplasm. The enzyme catalyses Hydrolysis of proteins to small peptides in the presence of ATP and magnesium. alpha-casein is the usual test substrate. In the absence of ATP, only oligopeptides shorter than five residues are hydrolyzed (such as succinyl-Leu-Tyr-|-NHMec, and Leu-Tyr-Leu-|-Tyr-Trp, in which cleavage of the -Tyr-|-Leu- and -Tyr-|-Trp bonds also occurs).. Cleaves peptides in various proteins in a process that requires ATP hydrolysis. Has a chymotrypsin-like activity. Plays a major role in the degradation of misfolded proteins. This is ATP-dependent Clp protease proteolytic subunit 2 from Synechococcus sp. (strain CC9605).